A 170-amino-acid polypeptide reads, in one-letter code: 3-isopropylmalate dehydratase small subunit 1 (170 aa).

The protein belongs to the LeuD family. LeuD type 2 subfamily. Heterodimer of LeuC and LeuD.

The enzyme catalyses (2R,3S)-3-isopropylmalate = (2S)-2-isopropylmalate. It functions in the pathway amino-acid biosynthesis; L-leucine biosynthesis; L-leucine from 3-methyl-2-oxobutanoate: step 2/4. Catalyzes the isomerization between 2-isopropylmalate and 3-isopropylmalate, via the formation of 2-isopropylmaleate. The chain is 3-isopropylmalate dehydratase small subunit 1 (leuD1) from Methanopyrus kandleri (strain AV19 / DSM 6324 / JCM 9639 / NBRC 100938).